Here is a 702-residue protein sequence, read N- to C-terminus: Arginine decarboxylase 1 (702 aa).

Lys-151 bears the N6-(pyridoxal phosphate)lysine mark. 336-346 is a binding site for substrate; sequence IDVGGGLGIDY. The span at 668–686 shows a compositional bias: low complexity; that stretch reads ASGESSGMSSDSEGSAAGA. Residues 668-702 form a disordered region; that stretch reads ASGESSGMSSDSEGSAAGAAEEDDDEWEFMRGLTV.

Belongs to the Orn/Lys/Arg decarboxylase class-II family. SpeA subfamily. Pyridoxal 5'-phosphate is required as a cofactor. It depends on Mg(2+) as a cofactor. In terms of tissue distribution, expressed in roots, leaves and stems (at protein level).

It carries out the reaction L-arginine + H(+) = agmatine + CO2. Its pathway is amine and polyamine biosynthesis; agmatine biosynthesis; agmatine from L-arginine: step 1/1. In Oryza sativa subsp. japonica (Rice), this protein is Arginine decarboxylase 1 (ADC1).